A 318-amino-acid polypeptide reads, in one-letter code: L-lactate dehydrogenase (318 aa).

NAD(+)-binding positions include Val18, Asp39, Lys44, Tyr69, and Gly83–Ala84. Positions 86 and 92 each coordinate substrate. Residues Ser105, Val122–Asn124, and Ser147 each bind NAD(+). Asn124–Asp127 contacts substrate. Asp152–Arg155 is a substrate binding site. His179 (proton acceptor) is an active-site residue. A Phosphotyrosine modification is found at Tyr225. Position 234 (Thr234) interacts with substrate.

This sequence belongs to the LDH/MDH superfamily. LDH family. In terms of assembly, homotetramer.

The protein localises to the cytoplasm. It carries out the reaction (S)-lactate + NAD(+) = pyruvate + NADH + H(+). Its pathway is fermentation; pyruvate fermentation to lactate; (S)-lactate from pyruvate: step 1/1. Catalyzes the conversion of lactate to pyruvate. In Clostridium botulinum (strain ATCC 19397 / Type A), this protein is L-lactate dehydrogenase.